The sequence spans 465 residues: Putative F-box/FBD/LRR-repeat protein At1g22000 (465 aa).

The F-box domain maps to 28-74 (ETRICALPDDLLLQILPHVPTKEAVATSILSKQWRYVWLMLPKLEFK). LRR repeat units follow at residues 154-181 (CLTL…SLHY), 182-207 (VVYK…SVHS), 210-230 (DDNL…NYDE), 248-273 (NEVE…HLSE), and 339-365 (ISLV…TIDN). Residues 373–424 (SWNQPSSIPGCLLSHLETFRWRGYGGREDAKKLLMTYILANSKCLKTVEISL) form the FBD domain.

This Arabidopsis thaliana (Mouse-ear cress) protein is Putative F-box/FBD/LRR-repeat protein At1g22000.